The following is a 187-amino-acid chain: MSTGNFDLNELKRRMQGATQALKHELGGLRTGRASASMVEPVQVEAYGSHMPLNQLATVSVPEPRLLSVQVWDRTMVKAVEKAIVDSNLGLSPATEGQVIRLRIPELNQERRKELVKVAHKYAEAARVAVRHVRRDGLDTVKKLEKNHEISEDDQERLATDIQKATDSVISEIDQLLAAKEKEILTV.

The protein belongs to the RRF family.

The protein localises to the cytoplasm. Functionally, responsible for the release of ribosomes from messenger RNA at the termination of protein biosynthesis. May increase the efficiency of translation by recycling ribosomes from one round of translation to another. This is Ribosome-recycling factor from Bradyrhizobium sp. (strain BTAi1 / ATCC BAA-1182).